A 427-amino-acid chain; its full sequence is Phosphatidylglycerol--prolipoprotein diacylglyceryl transferase (427 aa).

4 helical membrane-spanning segments follow: residues 21–41 (VPIR…LLIG), 53–73 (GVIY…GRLY), 96–116 (IWDG…GAWI), and 122–142 (GIPL…AQAI). Arginine 144 provides a ligand contact to a 1,2-diacyl-sn-glycero-3-phospho-(1'-sn-glycerol). 2 helical membrane-spanning segments follow: residues 189 to 209 (VALV…LIFV) and 256 to 276 (INSF…MAAP). The tract at residues 280–427 (EDPESLRGNQ…ARLRERLSGR (148 aa)) is disordered. Positions 299-330 (EPATVAATTEAATEGVAAPADGAEAAGADATA) are enriched in low complexity. The span at 332-346 (RPEESAEPDVEKPES) shows a compositional bias: basic and acidic residues. A compositionally biased stretch (acidic residues) spans 347–404 (EETEAAEEASEPEAEEPEAPEAEEPEEPETEEPEADSGEEPEEESGEAPEQLVAEEPE). The span at 411-427 (ETKRRWGARLRERLSGR) shows a compositional bias: basic and acidic residues.

The protein belongs to the Lgt family.

The protein localises to the cell membrane. It catalyses the reaction L-cysteinyl-[prolipoprotein] + a 1,2-diacyl-sn-glycero-3-phospho-(1'-sn-glycerol) = an S-1,2-diacyl-sn-glyceryl-L-cysteinyl-[prolipoprotein] + sn-glycerol 1-phosphate + H(+). The protein operates within protein modification; lipoprotein biosynthesis (diacylglyceryl transfer). Its function is as follows. Catalyzes the transfer of the diacylglyceryl group from phosphatidylglycerol to the sulfhydryl group of the N-terminal cysteine of a prolipoprotein, the first step in the formation of mature lipoproteins. This chain is Phosphatidylglycerol--prolipoprotein diacylglyceryl transferase, found in Mycolicibacterium paratuberculosis (strain ATCC BAA-968 / K-10) (Mycobacterium paratuberculosis).